Consider the following 474-residue polypeptide: MDFYSVKSQPFVRSPLVDQNPSIQNINEEVKRDIQNPLSYKTETSDKELCQTAACATSCSDWYPQQQTHMPHQNAFDSAKATAKMALPPTAFSNYCVKPSLTRNKDIPRTSIRVSKLRYWQRDYRLAFPNFIFYFDNVDEEIKRRVTQKINNLGAKVATLFTFEVTHFITTRTTDPEMCQPNDVLYLSKTANMKIWLLDKLLNRILFTLLNSDSLVNTSASCLQSLLDGEKVYGTSDKDFYVPSKNVEYFREYFLCIRDLSQYYKPIAVREWEKTLDSGEILWPSLAITAQGRCPFNTGRRRELKITKHNHPAHEIRKQLLSCTNQTNQNNVVKNSASVLVRQIMGDYNITESAVDGAKQMPTEFPKPENLLPVEKRAAMSPLNLLEPRLINKQNTLANQSPRQPPNAFDADPLAHKKVKIETKSGYCENCCERYKDLERHLGGKHHRRFAEKDENFQGLDDLFLLIRRPIRTN.

The 54-residue stretch at 125-178 (RLAFPNFIFYFDNVDEEIKRRVTQKINNLGAKVATLFTFEVTHFITTRTTDPEM) folds into the BRCT domain. The segment at 421–470 (IETKSGYCENCCERYKDLERHLGGKHHRRFAEKDENFQGLDDLFLLIRRP) adopts a DBF4-type zinc-finger fold. Residues C428, C431, H441, and H447 each coordinate Zn(2+).

The protein localises to the nucleus. Its function is as follows. May act as a kinase regulator. Essential for progression of meiosis II and sporulation. This chain is Sporulation-specific protein 6 (spo6), found in Schizosaccharomyces pombe (strain 972 / ATCC 24843) (Fission yeast).